The sequence spans 216 residues: Ras-related protein Rab-11A (216 aa).

Glycine 2 is modified (N-acetylglycine). Residues serine 20, glycine 21, valine 22, glycine 23, lysine 24, serine 25, asparagine 26, asparagine 37, leucine 38, serine 40, serine 42, and threonine 43 each contribute to the GTP site. Residue serine 25 participates in Mg(2+) binding. Residues 36–47 (FNLESKSTIGVE) carry the Switch 1 motif. The Mg(2+) site is built by threonine 43 and aspartate 66. Positions 67 to 86 (TAGQERYRAITSAYYRGAVG) match the Switch 2 motif. Positions 69, 124, 125, 127, 155, and 156 each coordinate GTP. Positions 183–207 (DRRENDMSPSNNVVPIHVPPTTENK) are disordered. Residues cysteine 212 and cysteine 213 are each lipidated (S-geranylgeranyl cysteine). At cysteine 213 the chain carries Cysteine methyl ester. The propeptide at 214-216 (QNI) is removed in mature form.

The protein belongs to the small GTPase superfamily. Rab family. Interacts (GTP-bound form) with RAB11FIPs (via their C-termini) including RAB11FIP1, RAB11FIP2, RAB11FIP3, RAB11FIP4 and RAB11FIP5 effectors. Forms a complex with RAB11FIP3 and dynein intermediate chain DYNC1LI1; the interaction between RAB11A1 and RAB11FIP3 is direct; the complex regulates endocytic trafficking. Interacts with EVI5; EVI5 and RAB11FIP3 may be mutually exclusive and compete for binding RAB11A. Interacts with SGSM1, SGSM2, SGSM3 and VIPAS39. Interacts with EXOC6 in a GTP-dependent manner. Interacts with RAB11FIP5. Interacts with STXBP6. Interacts (GDP-bound form) with ZFYVE27. Interacts with BIRC6/bruce. May interact with TBC1D14. Interacts with UNC119; in a cell cycle-dependent manner. GDP-bound and nucleotide-free forms interact with SH3BP5. Interacts (GDP-bound form) with KIF5A in a ZFYVE27-dependent manner. Interacts (GDP-bound form) with RELCH. Found in a complex composed of RELCH, OSBP1 and RAB11A. Interacts with TBC1D12. Interacts with DEF6. Interacts with ATP9A. Forms a heterotetramer with RAB11FIP3; the GTP-bound form is preferred for binding. Forms a complex with Rabin8/RAB3IP and RAB11FIP3, probably a heterohexamer with two of each protein subunit, where Rabin8/RAB3IP and RAB11FIP3 simultaneously bind to RAB11A; the complex promotes preciliary trafficking and cilia growth. Forms a complex containing RAB11A, ASAP1, Rabin8/RAB3IP, RAP11FIP3 and ARF4; the complex promotes preciliary trafficking; the complex binds to RHO in photoreceptor cells and promotes RHO ciliary transport. Interacts (GTP-bound form) with WDR44; the interaction prevents RAB11A-RAB3IP-RAB11FIP3 complex formation. Requires Mg(2+) as cofactor.

Its subcellular location is the cell membrane. The protein localises to the endosome membrane. The protein resides in the recycling endosome membrane. It localises to the cleavage furrow. It is found in the cytoplasmic vesicle. Its subcellular location is the phagosome. The protein localises to the cytoplasmic vesicle membrane. The protein resides in the golgi apparatus. It localises to the trans-Golgi network. It catalyses the reaction GTP + H2O = GDP + phosphate + H(+). Regulated by guanine nucleotide exchange factors (GEFs) which promote the exchange of bound GDP for free GTP. Regulated by GTPase activating proteins (GAPs) which increase the GTP hydrolysis activity. Inhibited by GDP dissociation inhibitors (GDIs) which prevent Rab-GDP dissociation. Functionally, the small GTPases Rab are key regulators of intracellular membrane trafficking, from the formation of transport vesicles to their fusion with membranes. Rabs cycle between an inactive GDP-bound form and an active GTP-bound form that is able to recruit to membranes different set of downstream effectors directly responsible for vesicle formation, movement, tethering and fusion. The small Rab GTPase RAB11A regulates endocytic recycling. Forms a functional Rab11/RAB11FIP3/dynein complex that regulates the movement of peripheral sorting endosomes (SE) along microtubule tracks toward the microtubule organizing center/centrosome, generating the endosomal recycling compartment (ERC). Acts as a major regulator of membrane delivery during cytokinesis. Together with MYO5B and RAB8A participates in epithelial cell polarization. Together with Rabin8/RAB3IP, RAB8A, the exocyst complex, PARD3, PRKCI, ANXA2, CDC42 and DNMBP promotes transcytosis of PODXL to the apical membrane initiation sites (AMIS), apical surface formation and lumenogenesis. Together with MYO5B participates in CFTR trafficking to the plasma membrane and TF (Transferrin) recycling in nonpolarized cells. Required in a complex with MYO5B and RAB11FIP2 for the transport of NPC1L1 to the plasma membrane. Participates in the sorting and basolateral transport of CDH1 from the Golgi apparatus to the plasma membrane. Regulates the recycling of FCGRT (receptor of Fc region of monomeric IgG) to basolateral membranes. May also play a role in melanosome transport and release from melanocytes. Promotes Rabin8/RAB3IP preciliary vesicular trafficking to mother centriole by forming a ciliary targeting complex containing Rab11, ASAP1, Rabin8/RAB3IP, RAB11FIP3 and ARF4, thereby regulating ciliogenesis initiation. On the contrary, upon LPAR1 receptor signaling pathway activation, interaction with phosphorylated WDR44 prevents Rab11-RAB3IP-RAB11FIP3 complex formation and cilia growth. Participates in the export of a subset of neosynthesized proteins through a Rab8-Rab10-Rab11-endososomal dependent export route via interaction with WDR44. In Bos taurus (Bovine), this protein is Ras-related protein Rab-11A.